The chain runs to 612 residues: Rhotekin-2 (612 aa).

The REM-1 domain maps to 3–79; sequence IKRKKIRESA…LRSQMGESNT (77 aa). The PH domain maps to 285 to 392; the sequence is DEAMMGFLNQ…WMEAFWQHFY (108 aa). Disordered regions lie at residues 483-530 and 574-612; these read RNKP…SDKE and ENKA…QSQV. Residues 486–498 are compositionally biased toward low complexity; that stretch reads PPLLSSDDPSTSS.

The polypeptide is Rhotekin-2 (rtkn2) (Xenopus laevis (African clawed frog)).